Reading from the N-terminus, the 252-residue chain is 3-deoxy-manno-octulosonate cytidylyltransferase 2 (252 aa).

This sequence belongs to the KdsB family.

Its subcellular location is the cytoplasm. The enzyme catalyses 3-deoxy-alpha-D-manno-oct-2-ulosonate + CTP = CMP-3-deoxy-beta-D-manno-octulosonate + diphosphate. Its pathway is nucleotide-sugar biosynthesis; CMP-3-deoxy-D-manno-octulosonate biosynthesis; CMP-3-deoxy-D-manno-octulosonate from 3-deoxy-D-manno-octulosonate and CTP: step 1/1. It functions in the pathway bacterial outer membrane biogenesis; lipopolysaccharide biosynthesis. Functionally, activates KDO (a required 8-carbon sugar) for incorporation into bacterial lipopolysaccharide in Gram-negative bacteria. The polypeptide is 3-deoxy-manno-octulosonate cytidylyltransferase 2 (Actinobacillus pleuropneumoniae serotype 5b (strain L20)).